Reading from the N-terminus, the 328-residue chain is GTP 3',8-cyclase (328 aa).

In terms of domain architecture, Radical SAM core spans 1 to 229; the sequence is MNQVDYLRIS…DAQVRGSGPA (229 aa). Arg8 is a GTP binding site. [4Fe-4S] cluster contacts are provided by Cys15 and Cys19. Tyr21 contacts S-adenosyl-L-methionine. Cys22 is a [4Fe-4S] cluster binding site. Arg60 is a GTP binding site. Gly64 contacts S-adenosyl-L-methionine. Thr91 contributes to the GTP binding site. Ser115 is an S-adenosyl-L-methionine binding site. Residue Lys155 coordinates GTP. Position 189 (Met189) interacts with S-adenosyl-L-methionine. [4Fe-4S] cluster-binding residues include Cys252 and Cys255. GTP is bound at residue 257-259; that stretch reads RMR. Residue Cys269 participates in [4Fe-4S] cluster binding.

Belongs to the radical SAM superfamily. MoaA family. As to quaternary structure, monomer and homodimer. Requires [4Fe-4S] cluster as cofactor.

The catalysed reaction is GTP + AH2 + S-adenosyl-L-methionine = (8S)-3',8-cyclo-7,8-dihydroguanosine 5'-triphosphate + 5'-deoxyadenosine + L-methionine + A + H(+). Its pathway is cofactor biosynthesis; molybdopterin biosynthesis. Its function is as follows. Catalyzes the cyclization of GTP to (8S)-3',8-cyclo-7,8-dihydroguanosine 5'-triphosphate. This is GTP 3',8-cyclase from Trichormus variabilis (strain ATCC 29413 / PCC 7937) (Anabaena variabilis).